Consider the following 4690-residue polypeptide: Nonribosomal peptide synthetase sidN (4690 aa).

Residues 238–656 (ARVRENPGRI…LGRLSSDQIK (419 aa)) form an adenylation 1 region. The Carrier 1 domain occupies 779–856 (SSSIPMLQSV…DLDTKAQQAL (78 aa)). An O-(pantetheine 4'-phosphoryl)serine modification is found at S816. The segment at 924–1175 (APGGKAFIQH…AFGNTMSDRF (252 aa)) is condensation 1. Residues 1349–1760 (EFAQKSPNAI…GRKDDLVKIR (412 aa)) are adenylation 2. One can recognise a Carrier 2 domain in the interval 1889–1965 (PAWCIKHRPL…DLINHLSVKR (77 aa)). S1926 bears the O-(pantetheine 4'-phosphoryl)serine mark. A condensation 2 region spans residues 2001–2285 (PTTVFQDGML…SERLLESQLV (285 aa)). The segment at 2464-2869 (TWAKTHPEWK…GRKDEQVKVR (406 aa)) is adenylation 3. The Carrier 3 domain occupies 3002–3079 (RDLTSIEKQI…ELGRMKNALK (78 aa)). At S3040 the chain carries O-(pantetheine 4'-phosphoryl)serine. Residues 3121–3530 (CMPLQEVLVA…QMESLVTSFT (410 aa)) are condensation 3. The Carrier 4 domain occupies 3564 to 3637 (SVLEQQIRDV…KLATHIQTTS (74 aa)). At S3598 the chain carries O-(pantetheine 4'-phosphoryl)serine. Residues 3679–4087 (VYPLTPLQAG…FESIRKHPDE (409 aa)) are condensation 4. A Carrier 5 domain is found at 4119–4195 (SAIDQFLDPL…KLCEVAFAKS (77 aa)). The residue at position 4156 (S4156) is an O-(pantetheine 4'-phosphoryl)serine. The tract at residues 4262-4589 (WVFKAENGLD…FNAHLNILWN (328 aa)) is condensation 5.

It belongs to the NRP synthetase family.

Its pathway is siderophore biosynthesis. Functionally, nonribosomal peptide synthetase required for the biosynthetis of epichloenin A, an extracellular siderophore that plays a crucial role in endophyte-grass symbioses. SidN assembles epichloenin A by activating and incorporating three trans-anhydromevalonylhydroxyornithine (trans-AMHO), 1 glutamine and 4 glycine moieties. Trans-AMHO is produced from L-ornithine via 2 steps involving a L-ornithine N(5)-monooxygenase and an AHMO-N(5)-transacylase that have still to be identified. The third adenylation domain (A3) of sidN incorporates the hydroxamate groups of the siderophore which forms an octahedral iron complex. The other component amino acids are assembled by sidN adenylation domains A1 and A2. The chain is Nonribosomal peptide synthetase sidN from Epichloe festucae (strain Fl1).